A 336-amino-acid polypeptide reads, in one-letter code: tRNA N6-adenosine threonylcarbamoyltransferase (336 aa).

The Fe cation site is built by histidine 110 and histidine 114. Substrate is bound by residues 133-137, aspartate 166, glycine 179, and asparagine 271; that span reads LVSGK. Aspartate 300 is a binding site for Fe cation.

It belongs to the KAE1 / TsaD family. Requires Fe(2+) as cofactor.

The protein resides in the cytoplasm. It catalyses the reaction L-threonylcarbamoyladenylate + adenosine(37) in tRNA = N(6)-L-threonylcarbamoyladenosine(37) in tRNA + AMP + H(+). In terms of biological role, required for the formation of a threonylcarbamoyl group on adenosine at position 37 (t(6)A37) in tRNAs that read codons beginning with adenine. Is involved in the transfer of the threonylcarbamoyl moiety of threonylcarbamoyl-AMP (TC-AMP) to the N6 group of A37, together with TsaE and TsaB. TsaD likely plays a direct catalytic role in this reaction. This chain is tRNA N6-adenosine threonylcarbamoyltransferase, found in Buchnera aphidicola subsp. Acyrthosiphon pisum (strain 5A).